Reading from the N-terminus, the 194-residue chain is MSEEVSAPARLLFNRWDTSEVTIRDPGIARYVNLNSMMVPHSCGRLTRQEFHKANMLIVERLINQLMRTEVNTGKKQLAIRIVRDAFEIVHQKTKKNPIEVLCDAVANAGPREETVRLKYGGINVPKSVDTAPMRRVNTAVGLIAAGVYSASHKKKKPVANALAEELIAAANGDVKCYSVAKREERERVAKSAR.

The protein belongs to the universal ribosomal protein uS7 family. As to quaternary structure, part of the 30S ribosomal subunit.

In terms of biological role, one of the primary rRNA binding proteins, it binds directly to 16S rRNA where it nucleates assembly of the head domain of the 30S subunit. Is located at the subunit interface close to the decoding center. In Methanospirillum hungatei JF-1 (strain ATCC 27890 / DSM 864 / NBRC 100397 / JF-1), this protein is Small ribosomal subunit protein uS7.